The chain runs to 88 residues: Small ribosomal subunit protein uS15 (88 aa).

This sequence belongs to the universal ribosomal protein uS15 family. Part of the 30S ribosomal subunit. Forms a bridge to the 50S subunit in the 70S ribosome, contacting the 23S rRNA.

One of the primary rRNA binding proteins, it binds directly to 16S rRNA where it helps nucleate assembly of the platform of the 30S subunit by binding and bridging several RNA helices of the 16S rRNA. Its function is as follows. Forms an intersubunit bridge (bridge B4) with the 23S rRNA of the 50S subunit in the ribosome. This chain is Small ribosomal subunit protein uS15, found in Hydrogenovibrio crunogenus (strain DSM 25203 / XCL-2) (Thiomicrospira crunogena).